The following is a 309-amino-acid chain: MFSPADNIFIILITGEFILGILGNGYIALVNWIDWIKKKKISTTDYILTNLVISRICLISVIVVNGIVTVLYPDVYTKSKLQIAISTFWTFANYLNMWFTTCLNVFYFLKIANSSHPLFLWLKQKIDMVVRWILLGCFAISLLVSLIIAIVLSRDYRFHAIAKHKRNITEMFHVSKMLYFEPLTLFNLLAIVPFIVSLMSFFLLVRSLQRHTKQIKLYATGGRDPSTEAHVRAIKTMTSFIFFFFLYYITSLLVTFSYLMTKYKLAMAFGEIVAILYPSGHSFILIILNNKLRQASVRMLTCIKITCVI.

Topologically, residues 1 to 7 are extracellular; the sequence is MFSPADN. A helical membrane pass occupies residues 8 to 28; the sequence is IFIILITGEFILGILGNGYIA. The Cytoplasmic portion of the chain corresponds to 29-50; that stretch reads LVNWIDWIKKKKISTTDYILTN. A helical transmembrane segment spans residues 51-71; it reads LVISRICLISVIVVNGIVTVL. At 72 to 82 the chain is on the extracellular side; sequence YPDVYTKSKLQ. Residues 83 to 103 traverse the membrane as a helical segment; the sequence is IAISTFWTFANYLNMWFTTCL. The Cytoplasmic segment spans residues 104–131; sequence NVFYFLKIANSSHPLFLWLKQKIDMVVR. Residues 132-152 traverse the membrane as a helical segment; it reads WILLGCFAISLLVSLIIAIVL. Topologically, residues 153-184 are extracellular; that stretch reads SRDYRFHAIAKHKRNITEMFHVSKMLYFEPLT. A glycan (N-linked (GlcNAc...) asparagine) is linked at N167. A helical transmembrane segment spans residues 185–205; it reads LFNLLAIVPFIVSLMSFFLLV. The Cytoplasmic portion of the chain corresponds to 206-239; that stretch reads RSLQRHTKQIKLYATGGRDPSTEAHVRAIKTMTS. Residues 240–260 traverse the membrane as a helical segment; it reads FIFFFFLYYITSLLVTFSYLM. Over 261-266 the chain is Extracellular; it reads TKYKLA. Residues 267–287 form a helical membrane-spanning segment; it reads MAFGEIVAILYPSGHSFILII. The Cytoplasmic segment spans residues 288-309; it reads LNNKLRQASVRMLTCIKITCVI.

The protein belongs to the G-protein coupled receptor T2R family.

The protein localises to the membrane. Receptor that may play a role in the perception of bitterness and is gustducin-linked. May play a role in sensing the chemical composition of the gastrointestinal content. The activity of this receptor may stimulate alpha gustducin, mediate PLC-beta-2 activation and lead to the gating of TRPM5. The protein is Taste receptor type 2 member 8 (TAS2R8) of Pongo pygmaeus (Bornean orangutan).